A 398-amino-acid chain; its full sequence is Acetate kinase (398 aa).

Asn-7 provides a ligand contact to Mg(2+). Lys-14 is a binding site for ATP. Position 92 (Arg-92) interacts with substrate. The Proton donor/acceptor role is filled by Asp-149. Residues 209–213 (HLGNG), 284–286 (DFR), and 332–336 (GVGEN) each bind ATP. Glu-385 contacts Mg(2+).

The protein belongs to the acetokinase family. In terms of assembly, homodimer. It depends on Mg(2+) as a cofactor. Mn(2+) is required as a cofactor.

It is found in the cytoplasm. The catalysed reaction is acetate + ATP = acetyl phosphate + ADP. Its pathway is metabolic intermediate biosynthesis; acetyl-CoA biosynthesis; acetyl-CoA from acetate: step 1/2. In terms of biological role, catalyzes the formation of acetyl phosphate from acetate and ATP. Can also catalyze the reverse reaction. The chain is Acetate kinase from Clostridioides difficile (strain 630) (Peptoclostridium difficile).